A 335-amino-acid polypeptide reads, in one-letter code: MSQIESLSQIEGKLNNLSLLANENIKNAKSDSELDQLRVSLLGKKGELSIILKTMGKLSSVDRPIIGQKANLIKINLQDLITERKNQLISEAIDKQIEDEKIDVTIPSTGTLPGNKHPLISTQDEIIDIFCGLGYSVENGPEIESDFYNFESLNIPKNHPARDMQDTFYLDENRLLRTHTSPVQIRYLENNPPPVRIIAPGRVYRRDAVDATHSPVFNQVEVLCIDQDINFSHLRGTVLTFLKTFFGDIPVRFRASYFPFTEPSAEVDVQWKGKWLEVMGCGMVDPKVLEKLGIDSEKWTGFAAGLGVERFCMVRHQIDDIRRFYTNDLRFLKQF.

Glu-262 contributes to the Mg(2+) binding site.

Belongs to the class-II aminoacyl-tRNA synthetase family. Phe-tRNA synthetase alpha subunit type 1 subfamily. As to quaternary structure, tetramer of two alpha and two beta subunits. It depends on Mg(2+) as a cofactor.

Its subcellular location is the cytoplasm. The catalysed reaction is tRNA(Phe) + L-phenylalanine + ATP = L-phenylalanyl-tRNA(Phe) + AMP + diphosphate + H(+). In Prochlorococcus marinus subsp. pastoris (strain CCMP1986 / NIES-2087 / MED4), this protein is Phenylalanine--tRNA ligase alpha subunit.